We begin with the raw amino-acid sequence, 155 residues long: Basic phospholipase A2 PC9 (155 aa).

The first 21 residues, 1-21, serve as a signal peptide directing secretion; that stretch reads MYPAHLLVLLAVCVSLLGASA. Residues 22 to 27 constitute a propeptide that is removed on maturation; that stretch reads ISPRPL. Disulfide bonds link Cys38–Cys98, Cys54–Cys144, Cys56–Cys72, Cys71–Cys125, Cys78–Cys118, Cys87–Cys111, and Cys105–Cys116. 3 residues coordinate Ca(2+): Tyr55, Gly57, and Gly59. His75 is a catalytic residue. Position 76 (Asp76) interacts with Ca(2+). The active site involves Asp119.

It belongs to the phospholipase A2 family. Group I subfamily. D49 sub-subfamily. It depends on Ca(2+) as a cofactor. As to expression, expressed by the venom gland.

The protein localises to the secreted. It carries out the reaction a 1,2-diacyl-sn-glycero-3-phosphocholine + H2O = a 1-acyl-sn-glycero-3-phosphocholine + a fatty acid + H(+). Functionally, snake venom phospholipase A2 (PLA2) that inhibits neuromuscular transmission by blocking acetylcholine release from the nerve termini. PLA2 catalyzes the calcium-dependent hydrolysis of the 2-acyl groups in 3-sn-phosphoglycerides. This Laticauda colubrina (Yellow-lipped sea krait) protein is Basic phospholipase A2 PC9.